A 241-amino-acid polypeptide reads, in one-letter code: Methylthioribulose-1-phosphate dehydratase (241 aa).

C102 contributes to the substrate binding site. 3 residues coordinate Zn(2+): H120, H122, and H199.

It belongs to the aldolase class II family. MtnB subfamily. It depends on Zn(2+) as a cofactor.

It localises to the cytoplasm. The catalysed reaction is 5-(methylsulfanyl)-D-ribulose 1-phosphate = 5-methylsulfanyl-2,3-dioxopentyl phosphate + H2O. It functions in the pathway amino-acid biosynthesis; L-methionine biosynthesis via salvage pathway; L-methionine from S-methyl-5-thio-alpha-D-ribose 1-phosphate: step 2/6. Functionally, catalyzes the dehydration of methylthioribulose-1-phosphate (MTRu-1-P) into 2,3-diketo-5-methylthiopentyl-1-phosphate (DK-MTP-1-P). The chain is Methylthioribulose-1-phosphate dehydratase from Coprinopsis cinerea (strain Okayama-7 / 130 / ATCC MYA-4618 / FGSC 9003) (Inky cap fungus).